An 826-amino-acid polypeptide reads, in one-letter code: (2S)-3-sulfopropanediol dehydratase (826 aa).

One can recognise a PFL domain in the interval 33-695 (PRVNRLRQAF…NTNASIDGRK (663 aa)). The active-site Cysteine radical intermediate is the cysteine 464. The active-site Proton acceptor is the glutamate 466. Positions 706 to 826 (PVHTDGGSHD…DLIQRTELHF (121 aa)) constitute a Glycine radical domain. Position 802 is a glycine radical (glycine 802).

The protein belongs to the glycyl radical enzyme (GRE) family. In terms of processing, requires the activating protein HpfH to generate the key active site glycyl radical on Gly-802 that is involved in catalysis.

The enzyme catalyses (2S)-3-sulfopropanediol = 3-oxopropane-1-sulfonate + H2O. Its pathway is organosulfur degradation; alkanesulfonate degradation. Functionally, involved in the degradation of the organosulfur compound 2(S)-dihydroxypropanesulfonate (DHPS). Catalyzes the radical-mediated dehydration of DHPS to produce 3-sulfopropionaldehyde (3-oxopropane-1-sulfonate). This is (2S)-3-sulfopropanediol dehydratase from Klebsiella oxytoca.